We begin with the raw amino-acid sequence, 37 residues long: Large ribosomal subunit protein bL36 (37 aa).

This sequence belongs to the bacterial ribosomal protein bL36 family.

The protein is Large ribosomal subunit protein bL36 of Photobacterium profundum (strain SS9).